The primary structure comprises 60 residues: UPF0434 protein Vapar_2640 (60 aa).

It belongs to the UPF0434 family.

The protein is UPF0434 protein Vapar_2640 of Variovorax paradoxus (strain S110).